The sequence spans 327 residues: o-succinylbenzoate synthase (327 aa).

Lysine 110 acts as the Proton donor in catalysis. Residues aspartate 138, glutamate 165, and aspartate 188 each coordinate Mg(2+). Lysine 212 (proton acceptor) is an active-site residue.

The protein belongs to the mandelate racemase/muconate lactonizing enzyme family. MenC type 1 subfamily. Requires a divalent metal cation as cofactor.

The catalysed reaction is (1R,6R)-6-hydroxy-2-succinyl-cyclohexa-2,4-diene-1-carboxylate = 2-succinylbenzoate + H2O. The protein operates within quinol/quinone metabolism; 1,4-dihydroxy-2-naphthoate biosynthesis; 1,4-dihydroxy-2-naphthoate from chorismate: step 4/7. It participates in quinol/quinone metabolism; menaquinone biosynthesis. Converts 2-succinyl-6-hydroxy-2,4-cyclohexadiene-1-carboxylate (SHCHC) to 2-succinylbenzoate (OSB). This Mycobacterium marinum (strain ATCC BAA-535 / M) protein is o-succinylbenzoate synthase.